The sequence spans 985 residues: Guanine nucleotide exchange protein smcr8b (985 aa).

Residues 47–225 (ISSAKLKKDF…VKCSSEREPI (179 aa)) form the uDENN FLCN/SMCR8-type domain. The segment covering 242–292 (NEKSSHTDEISPQEKDGCGNSRKVEVKLENENRSHFEHEQYGKQRKDKPDK) has biased composition (basic and acidic residues). 3 disordered regions span residues 242–301 (NEKS…PLAN), 502–528 (QSQVQHSTLNTPSKDNRPQVADKSPAE), and 639–659 (EESPEQETDEKNSSQYQEDNN). The region spanning 390 to 895 (RLKTLEELCD…LINLLVEPKS (506 aa)) is the cDENN FLCN/SMCR8-type domain. A compositionally biased stretch (polar residues) spans 502–514 (QSQVQHSTLNTPS). A dDENN FLCN/SMCR8-type domain is found at 904-962 (FTFAQSVQSKLVTKAFLLTFSHGHPSPSRPQGSSGTECFLSELHTDDKKILRYLSELIK).

Belongs to the SMCR8 family. Component of the C9orf72-SMCR8 complex. The C9orf72-SMCR8 complex associates with the ATG1/ULK1 kinase complex.

The protein resides in the cytoplasm. Its subcellular location is the nucleus. Component of the C9orf72-SMCR8 complex, a complex that has guanine nucleotide exchange factor (GEF) activity and regulates autophagy. In the complex, C9orf72 and SMCR8 probably constitute the catalytic subunits that promote the exchange of GDP to GTP, converting inactive GDP-bound RAB8A and RAB39B into their active GTP-bound form, thereby promoting autophagosome maturation. The C9orf72-SMCR8 complex also acts as a negative regulator of autophagy initiation by interacting with the ATG1/ULK1 kinase complex and inhibiting its protein kinase activity. The protein is Guanine nucleotide exchange protein smcr8b (smcr8b) of Danio rerio (Zebrafish).